The following is a 396-amino-acid chain: MWIPVVGLPRRLRLSALAGAGRFCILGSEAATRKHLPARNHCGLSDSSPQLWPEPDFRNPPRKASKASLDFKRYVTDRRLAETLAQIYLGKPSRPPHLLLECNPGPGILTQALLEAGAKVVALESDKTFIPHLESLGKNLDGKLRVIHCDFFKLDPRSGGVIKPPAMSSRGLFKNLGIEAVPWTADIPLKVVGMFPSRGEKRALWKLAYDLYSCTSIYKFGRIEVNMFIGEKEFQKLMADPGNPDLYHVLSVIWQLACEIKVLHMEPWSSFDIYTRKGPLENPKRRELLDQLQQKLYLIQMIPRQNLFTKNLTPMNYNIFFHLLKHCFGRRSATVIDHLRSLTPLDARDILMQIGKQEDEKVVNMHPQDFKTLFETIERSKDCAYKWLYDETLEDR.

The N-terminal 19 residues, 1-19, are a transit peptide targeting the mitochondrion; it reads MWIPVVGLPRRLRLSALAG. Positions 44 to 64 are disordered; it reads LSDSSPQLWPEPDFRNPPRKA. Positions 75, 124, and 150 each coordinate S-adenosyl-L-methionine. The tract at residues 330-331 is DNA-binding; that stretch reads RR.

The protein belongs to the class I-like SAM-binding methyltransferase superfamily. rRNA adenine N(6)-methyltransferase family. KsgA subfamily. As to quaternary structure, homodimer. Component of the mitochondrial transcription initiation complex, composed at least of TFB2M, TFAM and POLRMT. In this complex TFAM recruits POLRMT to the promoter whereas TFB2M induces structural changes in POLRMT to enable promoter opening and trapping of the DNA non-template strand. Interacts with mitochondrial RNA polymerase POLRMT. Interacts with TFAM. Ubiquitously expressed.

The protein resides in the mitochondrion. The catalysed reaction is adenosine in rRNA + S-adenosyl-L-methionine = N(6)-methyladenosine in rRNA + S-adenosyl-L-homocysteine + H(+). Its function is as follows. S-adenosyl-L-methionine-dependent rRNA methyltransferase which may methylate two specific adjacent adenosines in the loop of a conserved hairpin near the 3'-end of 12S mitochondrial rRNA. Component of the mitochondrial transcription initiation complex, composed at least of TFB2M, TFAM and POLRMT that is required for basal transcription of mitochondrial DNA. In this complex, TFAM recruits POLRMT to a specific promoter whereas TFB2M induces structural changes in POLRMT to enable promoter opening and trapping of the DNA non-template strand. Stimulates transcription independently of the methyltransferase activity. The protein is Dimethyladenosine transferase 2, mitochondrial of Homo sapiens (Human).